The primary structure comprises 465 residues: Endo-1,3-1,4-beta-glycanase EglC (465 aa).

3 Hemolysin-type calcium-binding repeats span residues tyrosine 33–threonine 50, phenylalanine 105–isoleucine 122, and asparagine 123–phenylalanine 140. Residues leucine 213 to aspartate 462 enclose the GH16 domain. Glutamate 349 (nucleophile) is an active-site residue. The active-site Proton donor is glutamate 354.

The protein belongs to the glycosyl hydrolase 16 family.

It is found in the secreted. Its pathway is glycan metabolism; exopolysaccharide biosynthesis. Its function is as follows. Cleaves high molecular weight succinoglycan to yield LMW succinoglycan. Dynamically regulates the molecular weight distribution of succinoglycan by cleaving nascent succinoglycan only during a limited period after its synthesis, perhaps before it undergoes a time-dependent change in its conformation or aggregation state. The protein is Endo-1,3-1,4-beta-glycanase EglC (eglC) of Rhizobium meliloti (strain 1021) (Ensifer meliloti).